We begin with the raw amino-acid sequence, 666 residues long: MDLHQSPTARLLQKWCSHESPFGCRRHYNSRKKLKLIRVIGLVMGLVAVSTVPFSISAFTETDSQSNRGEASDMSGPRVAQGHRQRTLLDLNDKIRDYTPQPPASQEDQAENSTEHTQGDYPKDIFSLEERRKGAIILHVIGMIYMFIALAIVCDEFFVPSLTVITEKLGISDDVAGATFMAAGGSAPELFTSLIGVFIAHSNVGIGTIVGSAVFNILFVIGMCALFSREILNLTWWPLFRDVSFYIVDLLMLITFFLDNVIMWWESLLLLTAYFAYVVFMKFNVQVERWVKQMISRNNVIKVTVPEAQAKSPTAGDKDGPTLPSKPRLQRGGSSASLHNSLMRNSIFQLMIHTLDPLAEELGSYGKLKYYDTMTEEGRFREKASILHKIAKKKCQVDENERQNGAANHVEKIELPNSTSTEVEMTPSSEASEPVQNGNLSHNIEAADAPKATETAEEEDDQPLSLSWPTNTRKQATFLIVFPIVFPLWITLPDVRKPASRKFFPITFFGSITWIAVFSYLMVWWAHQVGETIGISEEIMGLTILAAGTSIPDLITSVIVARKGLGDMAVSSSVGSNIFDITVGLPLPWLLYTIIHRFSPVTVSSNGLFCAIVLLFIMLLFVILSIALCKWRMNKILGFIMFGLYFVFLVVSVLLEDKVLVCPVSI.

The Cytoplasmic segment spans residues 1-38 (MDLHQSPTARLLQKWCSHESPFGCRRHYNSRKKLKLIR). Residues 39 to 59 (VIGLVMGLVAVSTVPFSISAF) form a helical membrane-spanning segment. The Extracellular segment spans residues 60-133 (TETDSQSNRG…DIFSLEERRK (74 aa)). Positions 63–122 (DSQSNRGEASDMSGPRVAQGHRQRTLLDLNDKIRDYTPQPPASQEDQAENSTEHTQGDYP) are disordered. An N-linked (GlcNAc...) asparagine glycan is attached at N112. Basic and acidic residues predominate over residues 113 to 122 (STEHTQGDYP). Residues 134 to 154 (GAIILHVIGMIYMFIALAIVC) traverse the membrane as a helical segment. The Cytoplasmic portion of the chain corresponds to 155–179 (DEFFVPSLTVITEKLGISDDVAGAT). An Alpha-1 repeat occupies 175-215 (VAGATFMAAGGSAPELFTSLIGVFIAHSNVGIGTIVGSAVF). Residues 180–200 (FMAAGGSAPELFTSLIGVFIA) traverse the membrane as a helical segment. Topologically, residues 201 to 205 (HSNVG) are extracellular. Residues 206–226 (IGTIVGSAVFNILFVIGMCAL) form a helical membrane-spanning segment. The Cytoplasmic segment spans residues 227-237 (FSREILNLTWW). A helical transmembrane segment spans residues 238–258 (PLFRDVSFYIVDLLMLITFFL). The Extracellular segment spans residues 259–260 (DN). The helical transmembrane segment at 261-281 (VIMWWESLLLLTAYFAYVVFM) threads the bilayer. Residues 282 to 502 (KFNVQVERWV…PDVRKPASRK (221 aa)) lie on the Cytoplasmic side of the membrane. The segment at 311-336 (KSPTAGDKDGPTLPSKPRLQRGGSSA) is disordered. Phosphoserine is present on residues S337 and S341. Residues 397-467 (VDENERQNGA…EEDDQPLSLS (71 aa)) are disordered. A compositionally biased stretch (polar residues) spans 416–442 (PNSTSTEVEMTPSSEASEPVQNGNLSH). Residues 503-523 (FFPITFFGSITWIAVFSYLMV) form a helical membrane-spanning segment. Topologically, residues 524 to 538 (WWAHQVGETIGISEE) are extracellular. The chain crosses the membrane as a helical span at residues 539–559 (IMGLTILAAGTSIPDLITSVI). An Alpha-2 repeat occupies 546–577 (AAGTSIPDLITSVIVARKGLGDMAVSSSVGSN). At 560-574 (VARKGLGDMAVSSSV) the chain is on the cytoplasmic side. The chain crosses the membrane as a helical span at residues 575 to 595 (GSNIFDITVGLPLPWLLYTII). Residues 596–607 (HRFSPVTVSSNG) lie on the Extracellular side of the membrane. The chain crosses the membrane as a helical span at residues 608–628 (LFCAIVLLFIMLLFVILSIAL). Residues 629–635 (CKWRMNK) are Cytoplasmic-facing. Residues 636-656 (ILGFIMFGLYFVFLVVSVLLE) traverse the membrane as a helical segment. At 657–666 (DKVLVCPVSI) the chain is on the extracellular side.

Belongs to the Ca(2+):cation antiporter (CaCA) (TC 2.A.19) family. SLC24A subfamily.

The protein resides in the cell membrane. The enzyme catalyses Ca(2+)(out) + K(+)(out) + 4 Na(+)(in) = Ca(2+)(in) + K(+)(in) + 4 Na(+)(out). Its function is as follows. Calcium, potassium:sodium antiporter that transports 1 Ca(2+) and 1 K(+) in exchange for 4 Na(+). Required for learming and memory by regulating neuronal Ca(2+), which is essential for the development of synaptic plasticity. The polypeptide is Sodium/potassium/calcium exchanger 2 (Mus musculus (Mouse)).